The following is a 957-amino-acid chain: Receptor-like protein 53 (957 aa).

The first 30 residues, 1-30, serve as a signal peptide directing secretion; the sequence is MEGFWNSKSIIRITLSFIFLFICHFLDVLA. The Extracellular portion of the chain corresponds to 31–910; sequence APTRNLCRPE…EEEDEDLISW (880 aa). N-linked (GlcNAc...) asparagine glycosylation is found at Asn-78, Asn-114, Asn-143, Asn-167, and Asn-191. LRR repeat units lie at residues 120–143, 144–170, 172–192, 193–216, 217–240, 241–266, 268–287, 288–312, 313–336, 338–360, 361–384, and 386–409; these read LHFLTTLDLSFNDFKGQITSSIEN, LSHLTYLDLSSNHFSGQILNSIGNLSR, TYLNLFDNQFSGQAPSSICNL, SHLTFLDLSYNRFFGQFPSSIGGL, SHLTTLSLFSNKFSGQIPSSIGNL, SNLTTLDLSNNNFSGQIPSFIGNLSQ, TFLGLFSNNFVGEIPSSFGN, LNQLTRLYVDDNKLSGNFPNVLLNL, TGLSLLSLSNNKFTGTLPPNITSL, NLMDFDASDNAFTGTFPSFLFTI, PSLTYIRLNGNQLKGTLEFGNISS, and SNLYELDIGNNNFIGPIPSSISKL. 4 N-linked (GlcNAc...) asparagine glycosylation sites follow: Asn-239, Asn-242, Asn-252, and Asn-263. N-linked (GlcNAc...) asparagine glycans are attached at residues Asn-311 and Asn-332. The N-linked (GlcNAc...) asparagine glycan is linked to Asn-381. One copy of the LRR 13; degenerate repeat lies at 412-433; the sequence is LFRLDISHLNTQGPVDFSIFSH. 16 LRR repeats span residues 434 to 458, 460 to 483, 486 to 509, 510 to 533, 535 to 556, 558 to 580, 581 to 604, 605 to 629, 631 to 651, 652 to 674, 675 to 697, 698 to 721, 765 to 789, 790 to 813, 814 to 837, and 839 to 862; these read LKSLLDLNISHLNTTTRIDLNYFLS, FKRLLLLDLSGNHVSATNKSSVSD, SQLIQSLYLSGCGITEFPEFVRTQ, HELGFLDISNNKIKGQVPDWLWRL, ILYYVNLSNNTLIGFQRPSKPE, SLLYLLGSNNNFIGKIPSFICGL, RSLNTLDLSDNNFNGSIPRCMGHL, KSTLSVLNLRQNHLSGGLPKQIFEI, RSLDVGHNQLVGKLPRSLSFF, STLEVLNVESNRINDTFPFWLSS, LPKLQVLVLRSNAFHGPIHEATF, PELRIIDISHNRFNGTLPTEYFVK, LTIYTAVDFSGNRFEGEIPKSIGLL, KELLVLSLSNNAFSGHMPSSMGNL, TALESLDVSKNKLTGEIPQELGDL, and FLAYMNFSHNQLAGLVPGGQQFLT. N-linked (GlcNAc...) asparagine glycans are attached at residues Asn-441, Asn-446, and Asn-477. N-linked (GlcNAc...) asparagine glycans are attached at residues Asn-540 and Asn-543. The N-linked (GlcNAc...) asparagine glycan is linked to Asn-594. Residue Asn-665 is glycosylated (N-linked (GlcNAc...) asparagine). N-linked (GlcNAc...) asparagine glycosylation occurs at Asn-711. A glycan (N-linked (GlcNAc...) asparagine) is linked at Asn-812. N-linked (GlcNAc...) asparagine glycosylation is found at Asn-844 and Asn-864. The helical transmembrane segment at 911–931 threads the bilayer; sequence IAAAIGFGPGIAFGLMFGYIL. The Cytoplasmic segment spans residues 932-957; that stretch reads VSYKPEWFMNPFDRNNRRQKRHKTTH.

Belongs to the RLP family.

It is found in the cell membrane. The protein is Receptor-like protein 53 of Arabidopsis thaliana (Mouse-ear cress).